A 125-amino-acid chain; its full sequence is MARIAGVDLPREKKVEIGLTYIFGIGRKTAQKILEASGVSSAQRVRDLNDNDLNKLRQEIERNHRVEGALRTEVAMNIKRLMDIGSYRGTRHRRGLPVRGQRTHTNARTKKGPRRAIAGKKKVTK.

Positions 90-125 (TRHRRGLPVRGQRTHTNARTKKGPRRAIAGKKKVTK) are disordered.

It belongs to the universal ribosomal protein uS13 family. Part of the 30S ribosomal subunit. Forms a loose heterodimer with protein S19. Forms two bridges to the 50S subunit in the 70S ribosome.

Its function is as follows. Located at the top of the head of the 30S subunit, it contacts several helices of the 16S rRNA. In the 70S ribosome it contacts the 23S rRNA (bridge B1a) and protein L5 of the 50S subunit (bridge B1b), connecting the 2 subunits; these bridges are implicated in subunit movement. Contacts the tRNAs in the A and P-sites. The polypeptide is Small ribosomal subunit protein uS13 (Gemmatimonas aurantiaca (strain DSM 14586 / JCM 11422 / NBRC 100505 / T-27)).